The following is a 163-amino-acid chain: Putative protein CASTOR3P (163 aa).

It belongs to the GATS family.

The polypeptide is Putative protein CASTOR3P (Homo sapiens (Human)).